Reading from the N-terminus, the 267-residue chain is Formamidopyrimidine-DNA glycosylase (267 aa).

Proline 2 functions as the Schiff-base intermediate with DNA in the catalytic mechanism. Glutamate 3 (proton donor) is an active-site residue. Lysine 53 (proton donor; for beta-elimination activity) is an active-site residue. DNA is bound by residues histidine 82 and arginine 100. Residues alanine 230–glycine 264 form an FPG-type zinc finger. Arginine 254 functions as the Proton donor; for delta-elimination activity in the catalytic mechanism.

This sequence belongs to the FPG family. In terms of assembly, monomer. The cofactor is Zn(2+).

It catalyses the reaction Hydrolysis of DNA containing ring-opened 7-methylguanine residues, releasing 2,6-diamino-4-hydroxy-5-(N-methyl)formamidopyrimidine.. It carries out the reaction 2'-deoxyribonucleotide-(2'-deoxyribose 5'-phosphate)-2'-deoxyribonucleotide-DNA = a 3'-end 2'-deoxyribonucleotide-(2,3-dehydro-2,3-deoxyribose 5'-phosphate)-DNA + a 5'-end 5'-phospho-2'-deoxyribonucleoside-DNA + H(+). Involved in base excision repair of DNA damaged by oxidation or by mutagenic agents. Acts as a DNA glycosylase that recognizes and removes damaged bases. Has a preference for oxidized purines, such as 7,8-dihydro-8-oxoguanine (8-oxoG). Has AP (apurinic/apyrimidinic) lyase activity and introduces nicks in the DNA strand. Cleaves the DNA backbone by beta-delta elimination to generate a single-strand break at the site of the removed base with both 3'- and 5'-phosphates. The sequence is that of Formamidopyrimidine-DNA glycosylase from Thermus thermophilus (strain ATCC BAA-163 / DSM 7039 / HB27).